The following is a 185-amino-acid chain: SDAEKVYDIEGYPVFLGSEYYIVSAIIGAGGGGVRPGRTRGSMCPMSIIQEQSDLQMGLPVRFSSPEESQGKIYTDTELEIEFVEKPDCAESSKWVIVKDSGEARVAIGGSEDHPQGELVRGFFKIEKLGSLAYKLVFCPKSSSGSCSDIGINYEGRRSLVLKSSDDSPFRVVFVKPRSGSETES.

2 disulfide bridges follow: cysteine 44-cysteine 89 and cysteine 139-cysteine 147.

Belongs to the protease inhibitor I3 (leguminous Kunitz-type inhibitor) family.

It localises to the secreted. Its function is as follows. Inhibits bovine trypsin and human plasma kallikrein. The sequence is that of Kunitz-type serine protease inhibitor DrTI from Delonix regia (Royal poinciana).